Reading from the N-terminus, the 226-residue chain is Leucyl/phenylalanyl-tRNA--protein transferase (226 aa).

It belongs to the L/F-transferase family.

Its subcellular location is the cytoplasm. The catalysed reaction is N-terminal L-lysyl-[protein] + L-leucyl-tRNA(Leu) = N-terminal L-leucyl-L-lysyl-[protein] + tRNA(Leu) + H(+). It carries out the reaction N-terminal L-arginyl-[protein] + L-leucyl-tRNA(Leu) = N-terminal L-leucyl-L-arginyl-[protein] + tRNA(Leu) + H(+). It catalyses the reaction L-phenylalanyl-tRNA(Phe) + an N-terminal L-alpha-aminoacyl-[protein] = an N-terminal L-phenylalanyl-L-alpha-aminoacyl-[protein] + tRNA(Phe). Functions in the N-end rule pathway of protein degradation where it conjugates Leu, Phe and, less efficiently, Met from aminoacyl-tRNAs to the N-termini of proteins containing an N-terminal arginine or lysine. This Pseudomonas aeruginosa (strain UCBPP-PA14) protein is Leucyl/phenylalanyl-tRNA--protein transferase.